Here is a 194-residue protein sequence, read N- to C-terminus: Protein GrpE (194 aa).

Residues 1 to 39 are disordered; that stretch reads MTNHEQDQQDNSELLDDDQVTLESQQAADSGAEAPASDD. Residues 8–20 are compositionally biased toward acidic residues; sequence QQDNSELLDDDQV.

The protein belongs to the GrpE family. Homodimer.

The protein resides in the cytoplasm. Its function is as follows. Participates actively in the response to hyperosmotic and heat shock by preventing the aggregation of stress-denatured proteins, in association with DnaK and GrpE. It is the nucleotide exchange factor for DnaK and may function as a thermosensor. Unfolded proteins bind initially to DnaJ; upon interaction with the DnaJ-bound protein, DnaK hydrolyzes its bound ATP, resulting in the formation of a stable complex. GrpE releases ADP from DnaK; ATP binding to DnaK triggers the release of the substrate protein, thus completing the reaction cycle. Several rounds of ATP-dependent interactions between DnaJ, DnaK and GrpE are required for fully efficient folding. The protein is Protein GrpE of Saccharophagus degradans (strain 2-40 / ATCC 43961 / DSM 17024).